Reading from the N-terminus, the 131-residue chain is Phosphoribosyl-AMP cyclohydrolase (131 aa).

Position 78 (Asp78) interacts with Mg(2+). Cys79 contributes to the Zn(2+) binding site. Asp80 and Asp82 together coordinate Mg(2+). Zn(2+) contacts are provided by Cys96 and Cys103.

This sequence belongs to the PRA-CH family. Homodimer. It depends on Mg(2+) as a cofactor. Zn(2+) serves as cofactor.

It is found in the cytoplasm. It carries out the reaction 1-(5-phospho-beta-D-ribosyl)-5'-AMP + H2O = 1-(5-phospho-beta-D-ribosyl)-5-[(5-phospho-beta-D-ribosylamino)methylideneamino]imidazole-4-carboxamide. It functions in the pathway amino-acid biosynthesis; L-histidine biosynthesis; L-histidine from 5-phospho-alpha-D-ribose 1-diphosphate: step 3/9. Its function is as follows. Catalyzes the hydrolysis of the adenine ring of phosphoribosyl-AMP. The protein is Phosphoribosyl-AMP cyclohydrolase of Neisseria meningitidis serogroup C / serotype 2a (strain ATCC 700532 / DSM 15464 / FAM18).